The chain runs to 617 residues: Sodium-dependent noradrenaline transporter (617 aa).

The tract at residues 1-23 (MLLARMNPQVQPENNGADTGPEQ) is disordered. Residues 1-62 (MLLARMNPQV…AQPRETWGKK (62 aa)) are Cytoplasmic-facing. Residues 8 to 17 (PQVQPENNGA) are compositionally biased toward polar residues. A helical transmembrane segment spans residues 63–88 (IDFLLSVVGFAVDLANVWRFPYLCYK). Residues Gly71, Ala73, and Val74 each contribute to the Na(+) site. Residue Asp75 participates in (R)-noradrenaline binding. Position 75 (Asp75) interacts with dopamine. Asn78 lines the Na(+) pocket. (R)-noradrenaline contacts are provided by Tyr87 and Lys88. Over 89–92 (NGGG) the chain is Extracellular. Residues 93–116 (AFLIPYTLFLIIAGMPLFYMELAL) traverse the membrane as a helical segment. The Cytoplasmic portion of the chain corresponds to 117 to 135 (GQYNREGAATVWKICPFFK). The helical transmembrane segment at 136–166 (GVGYAVILIALYVGFYYNVIIAWSLYYLFSS) threads the bilayer. Ala145 and Gly149 together coordinate (R)-noradrenaline. Ala145 contacts dopamine. The Extracellular portion of the chain corresponds to 167–233 (FTLNLPWTDC…SSGIHDIGLP (67 aa)). Cys176 and Cys185 are oxidised to a cystine. 3 N-linked (GlcNAc...) asparagine glycosylation sites follow: Asn184, Asn192, and Asn198. The chain crosses the membrane as a helical span at residues 234–254 (QWQLLLCLMVVVIVLYFSLWK). Residues 255 to 257 (GVK) are Cytoplasmic-facing. Residues 258-282 (TSGKVVWITATLPYFVLFVLLVHGV) form a helical membrane-spanning segment. The Extracellular portion of the chain corresponds to 283-306 (TLPGASNGINAYLHIDFYRLKEAT). A helical membrane pass occupies residues 307–332 (VWIDAATQIFFSLGAGFGVLIAFASY). (R)-noradrenaline is bound at residue Phe317. Phe317 serves as a coordination point for dopamine. Na(+) is bound at residue Ser318. At 333-338 (NKFDNN) the chain is on the cytoplasmic side. A helical transmembrane segment spans residues 339–362 (CYRDALLTSSINCITSFVSGFAIF). Asn350 contacts Na(+). At 363–402 (SILGYMAHEHKVNIEDVATEGAGLVFILYPEAISTLSGST) the chain is on the extracellular side. Glu382 is a (R)-noradrenaline binding site. Glu382 serves as a coordination point for dopamine. Residues 403 to 428 (FWAVVFFVMLLALGLDSSMGGMEAVI) traverse the membrane as a helical segment. Na(+) contacts are provided by Asp418 and Ser419. At 429–443 (TGLADDFQVLKRHRK) the chain is on the cytoplasmic side. The chain crosses the membrane as a helical span at residues 444–464 (LFTFGVTFSTFLLALFCITKG). Gly465 is a topological domain (extracellular). A helical transmembrane segment spans residues 466–492 (IYVLTLLDTFAAGTSILFAVLMEAIGV). The Cytoplasmic portion of the chain corresponds to 493–522 (SWFYGVDRFSNDIQQMMGFRPGLYWRLCWK). A helical membrane pass occupies residues 523–545 (FVSPAFLLFVVVVSIINFKPLTY). Topologically, residues 546-548 (DDY) are extracellular. The helical transmembrane segment at 549–569 (IFPPWANWVGWGIALSSMVLV) threads the bilayer. Topologically, residues 570 to 617 (PIYVIYKFLSTQGSLWERLAYGITPENEHHLVAQRDIRQFQLQHWLAI) are cytoplasmic.

This sequence belongs to the sodium:neurotransmitter symporter (SNF) (TC 2.A.22) family. SLC6A2 subfamily. As to quaternary structure, monomer. Can form homodimers in the cell membrane; homodimerization is mostly mediated by cholesterol and lipids, and regulates neurotransmitter transport activity. Interacts with PRKCABP. In terms of processing, palmitoylated; palmitoylation regulates protein levels and neurotransmitter transport.

It is found in the cell membrane. It localises to the cell projection. Its subcellular location is the axon. The protein resides in the synapse. The protein localises to the synaptosome. The catalysed reaction is (R)-noradrenaline(out) + chloride(out) + Na(+)(out) = (R)-noradrenaline(in) + chloride(in) + Na(+)(in). It catalyses the reaction dopamine(out) + chloride(out) + Na(+)(out) = dopamine(in) + chloride(in) + Na(+)(in). It carries out the reaction dopamine(out) + chloride(out) + 2 Na(+)(out) = dopamine(in) + chloride(in) + 2 Na(+)(in). With respect to regulation, inhibited by mazindol, desipramine, nomifensine and nortriptyline. In terms of biological role, mediates sodium- and chloride-dependent transport of norepinephrine (also known as noradrenaline), the primary signaling neurotransmitter in the autonomic sympathetic nervous system. Is responsible for norepinephrine re-uptake and clearance from the synaptic cleft, thus playing a crucial role in norepinephrine inactivation and homeostasis. Can also mediate sodium- and chloride-dependent transport of dopamine. The sequence is that of Sodium-dependent noradrenaline transporter from Homo sapiens (Human).